A 126-amino-acid polypeptide reads, in one-letter code: S-adenosylmethionine decarboxylase proenzyme (126 aa).

S63 serves as the catalytic Schiff-base intermediate with substrate; via pyruvic acid. S63 bears the Pyruvic acid (Ser); by autocatalysis mark. The Proton acceptor; for processing activity role is filled by H68. C83 (proton donor; for catalytic activity) is an active-site residue.

The protein belongs to the prokaryotic AdoMetDC family. Type 1 subfamily. As to quaternary structure, heterotetramer of two alpha and two beta chains arranged as a dimer of alpha/beta heterodimers. Pyruvate serves as cofactor. Post-translationally, is synthesized initially as an inactive proenzyme. Formation of the active enzyme involves a self-maturation process in which the active site pyruvoyl group is generated from an internal serine residue via an autocatalytic post-translational modification. Two non-identical subunits are generated from the proenzyme in this reaction, and the pyruvate is formed at the N-terminus of the alpha chain, which is derived from the carboxyl end of the proenzyme. The post-translation cleavage follows an unusual pathway, termed non-hydrolytic serinolysis, in which the side chain hydroxyl group of the serine supplies its oxygen atom to form the C-terminus of the beta chain, while the remainder of the serine residue undergoes an oxidative deamination to produce ammonia and the pyruvoyl group blocking the N-terminus of the alpha chain.

It carries out the reaction S-adenosyl-L-methionine + H(+) = S-adenosyl 3-(methylsulfanyl)propylamine + CO2. It participates in amine and polyamine biosynthesis; S-adenosylmethioninamine biosynthesis; S-adenosylmethioninamine from S-adenosyl-L-methionine: step 1/1. Functionally, catalyzes the decarboxylation of S-adenosylmethionine to S-adenosylmethioninamine (dcAdoMet), the propylamine donor required for the synthesis of the polyamines spermine and spermidine from the diamine putrescine. The protein is S-adenosylmethionine decarboxylase proenzyme of Clostridium kluyveri (strain NBRC 12016).